The following is a 220-amino-acid chain: MMTALSCHGGCMDTHQLDAAEVRVLGALLEKQALTPDAYPLTLNALVGACNQLTSREPVMQLSESDASAALDALIAKKLVAERLPAGSRVAKYEHRLNYEWNIDGARLAALCLLTLRGPQTSAEIRARAGRIYSFSGVDEVETALNALADKYPPLAAKLERQPGEREARWCHLLSGEPQILPAQACEVIDVGLTGRVAALEAEVSALKAMVLALEQRLNG.

The protein belongs to the UPF0502 family.

This chain is UPF0502 protein CV_4303, found in Chromobacterium violaceum (strain ATCC 12472 / DSM 30191 / JCM 1249 / CCUG 213 / NBRC 12614 / NCIMB 9131 / NCTC 9757 / MK).